Consider the following 215-residue polypeptide: MFPLLGLFGGTFDPIHKGHLALANELIQKLPSLTEIQFIPSRQPPHRPSPLASPANRLEMIKRAIANQPNLILNDVEIKGNDISYTINTLKILRPLFLTHALCFILSTDAFADFKHWHQSSVILEYCHLIVVNRPNYRLPQQPWLSDLLSHHQTENAEDLGRFQFGKIFFQTLSPRPISATQIRHYLAKGDYEIVAPLLPKTVLAYIKAHKLYQQ.

The protein belongs to the NadD family.

It carries out the reaction nicotinate beta-D-ribonucleotide + ATP + H(+) = deamido-NAD(+) + diphosphate. The protein operates within cofactor biosynthesis; NAD(+) biosynthesis; deamido-NAD(+) from nicotinate D-ribonucleotide: step 1/1. Catalyzes the reversible adenylation of nicotinate mononucleotide (NaMN) to nicotinic acid adenine dinucleotide (NaAD). This Coxiella burnetii (strain Dugway 5J108-111) protein is Probable nicotinate-nucleotide adenylyltransferase.